The chain runs to 349 residues: MDSVALMPLLLLLLLQPPPATPAPPVRDPFALQLGDTQNCQLRCRDRYPKPQLAQEELGEDPIQSRRAKAYDRAVLTSACERGCRLFSICRFVARSSKPNATQAECEAACVEAYVKETEQQACSEGCWSQNPEPEPEPELEQKRKVLEAPSGALSLLDLFSTLCNDLVNSAQGFVSSTWTYYLQTDNGKVVVFQTQPVVESLGHEGARLQRVEVTWRGSHPEALEVHVDPVGPLDKVRKAKIRVKTSSKAKVESDELQDNDFLSCMSRRSGLPRWILACCLFLSVLVMLWLSCSTLVTAPGQHLKFQPLTLEQHKGYMVEPEWSLYPPPSHAYADSPPPYKLKLDLTKL.

An N-terminal signal peptide occupies residues 1–22 (MDSVALMPLLLLLLLQPPPATP). Residue N100 is glycosylated (N-linked (GlcNAc...) asparagine). Residues 276 to 296 (ILACCLFLSVLVMLWLSCSTL) traverse the membrane as a helical segment. The Microbody targeting signal motif lies at 347–349 (TKL).

The protein belongs to the TMEM59 family.

The protein resides in the golgi apparatus membrane. Its function is as follows. Modulates the O-glycosylation and complex N-glycosylation steps occurring during the Golgi maturation of APP. Inhibits APP transport to the cell surface and further shedding. This is Transmembrane protein 59-like (TMEM59L) from Bos taurus (Bovine).